Consider the following 470-residue polypeptide: ATP synthase subunit beta (470 aa).

157–164 (GGAGVGKT) contacts ATP.

Belongs to the ATPase alpha/beta chains family. As to quaternary structure, F-type ATPases have 2 components, CF(1) - the catalytic core - and CF(0) - the membrane proton channel. CF(1) has five subunits: alpha(3), beta(3), gamma(1), delta(1), epsilon(1). CF(0) has three main subunits: a(1), b(2) and c(9-12). The alpha and beta chains form an alternating ring which encloses part of the gamma chain. CF(1) is attached to CF(0) by a central stalk formed by the gamma and epsilon chains, while a peripheral stalk is formed by the delta and b chains.

The protein localises to the cell inner membrane. It carries out the reaction ATP + H2O + 4 H(+)(in) = ADP + phosphate + 5 H(+)(out). Functionally, produces ATP from ADP in the presence of a proton gradient across the membrane. The catalytic sites are hosted primarily by the beta subunits. The protein is ATP synthase subunit beta of Geobacter metallireducens (strain ATCC 53774 / DSM 7210 / GS-15).